A 299-amino-acid polypeptide reads, in one-letter code: Protein tantalus (299 aa).

Positions 16–100 (KDNRSPTTNS…RSSTFGARAG (85 aa)) are disordered. The segment covering 20–35 (SPTTNSNLSWQLNQMA) has biased composition (polar residues). A compositionally biased stretch (acidic residues) spans 53-69 (ESDDNVSSESHDSDDVD). Residues 84-93 (CISGSSRRSS) show a composition bias toward low complexity. S204 and S264 each carry phosphoserine.

As to quaternary structure, binds to DNA in vitro. Interacts directly with Asx. As to expression, ubiquitously expressed in precellularized embryos. Then it decreases at cellular blastoderm to increase again during germ band extension. During germ band extension, it is highly expressed in somatic and visceral mesoderm. Ubiquitously expressed in imaginal disks. In ovary, it is expressed from stage 10.

It localises to the nucleus. The protein resides in the cytoplasm. The protein localises to the chromosome. Potential cofactor involved in sensory organ development. Despite its interaction with the Polycomb group protein Asx, it does not regulate the expression of homeotic genes. This Drosophila melanogaster (Fruit fly) protein is Protein tantalus.